Reading from the N-terminus, the 334-residue chain is Large ribosomal subunit protein uL3 (334 aa).

Residues 1–10 (MGMKKNRPRR) show a composition bias toward basic residues. The interval 1–21 (MGMKKNRPRRGSLAFSPRKRA) is disordered.

The protein belongs to the universal ribosomal protein uL3 family. As to quaternary structure, part of the 50S ribosomal subunit. Forms a cluster with proteins L14 and L24e.

One of the primary rRNA binding proteins, it binds directly near the 3'-end of the 23S rRNA, where it nucleates assembly of the 50S subunit. This Methanococcus maripaludis (strain DSM 14266 / JCM 13030 / NBRC 101832 / S2 / LL) protein is Large ribosomal subunit protein uL3.